The sequence spans 94 residues: Putative regulatory protein THA_332 (94 aa).

Belongs to the RemA family.

This Thermosipho africanus (strain TCF52B) protein is Putative regulatory protein THA_332.